We begin with the raw amino-acid sequence, 540 residues long: Membrane protein insertase YidC (540 aa).

Transmembrane regions (helical) follow at residues 1-21, 351-371, 418-438, 464-484, and 497-517; these read MVVQNNFLFIAFIFVTFMMLD, NWGISIIIITFMVRGIMFPLT, LGGCMPLIIQMPIFLALYYML, ILPIIMGITMFLIQKISPSSI, and PLIFTIFFLWFPSGLVLYYII.

It belongs to the OXA1/ALB3/YidC family. Type 1 subfamily. As to quaternary structure, interacts with the Sec translocase complex via SecD. Specifically interacts with transmembrane segments of nascent integral membrane proteins during membrane integration.

The protein resides in the cell membrane. Required for the insertion and/or proper folding and/or complex formation of integral membrane proteins into the membrane. Involved in integration of membrane proteins that insert both dependently and independently of the Sec translocase complex, as well as at least some lipoproteins. Aids folding of multispanning membrane proteins. The sequence is that of Membrane protein insertase YidC from Wigglesworthia glossinidia brevipalpis.